Reading from the N-terminus, the 465-residue chain is Mothers against decapentaplegic homolog 1 (465 aa).

The residue at position 1 (Met1) is an N-acetylmethionine. In terms of domain architecture, MH1 spans 12 to 136; sequence PAVKRLLGWK…YKRVESPVLP (125 aa). Zn(2+) contacts are provided by Cys64, Cys109, Cys121, and His126. A disordered region spans residues 162–248; sequence NEPHMPLNAT…SQPMDTNMMA (87 aa). The span at 179-210 shows a compositional bias: low complexity; the sequence is PNSHPFPHSPNSSYPNSPGSSSSTYPHSPTSS. Positions 221–232 are enriched in pro residues; the sequence is DTPPPAYLPPED. The region spanning 271-465 is the MH2 domain; sequence WCSIVYYELN…SPHNPISSVS (195 aa). Thr322 is modified (phosphothreonine; by MINK1, TNIK and MAP4K4). Residues 418–428 form an L3 loop region; it reads KGWGAEYHRQD. Ser463 and Ser465 each carry phosphoserine.

This sequence belongs to the dwarfin/SMAD family. In terms of assembly, found in a complex with SMAD4 and YY1. Interacts with HGS, NANOG and ZCCHC12. Upon C-terminus phosphorylation: forms trimers with another SMAD1 and the co-SMAD SMAD4. Interacts with PEBP2-alpha subunit, CREB-binding protein (CBP), p300, SMURF1, SMURF2, USP15 and HOXC8. Associates with ZNF423 or ZNF521 in response to BMP2 leading to activate transcription of BMP target genes. Interacts with SKOR1. Interacts (via MH2 domain) with LEMD3. Binding to LEMD3 results in at least a partial reduction of receptor-mediated phosphorylation. Forms a ternary complex with PSMB4 and OAZ1 before PSMB4 is incorporated into the 20S proteasome. Interacts (via MH2 domain) with FAM83G (via MH2 domain); in a SMAD4-independent manner. Interacts with ZC3H3. Interacts with TMEM119. Interacts (via MH1 and MH2 domains) with ZNF8. Interacts with RANBP3L; the interaction increases when SMAD1 is not phosphorylated and mediates SMAD1 nuclear export. Interacts with EGR1; this interaction inhibits SMAD1 dephosphorylation. Interacts with SMAD6. Interacts with YAP1. Interacts with MTMR4; negatively regulates BMP signaling through SMAD1 dephosphorylation and retention in endosomes. In terms of processing, phosphorylation of the C-terminal SVS motif by BMP type 1 receptor kinase activates SMAD1 by promoting dissociation from the receptor and trimerization with SMAD4. Phosphorylation by ERK2 MAP kinase in response to EGF or HGF prevents SMAD1 nuclear accumulation and transcriptional activity in response to BMP. Dephosphorylation, probably by PPM1A, induces its export from the nucleus to the cytoplasm. Dephosphorylation is inhibited by association with EGR1. Phosphorylation by CDK8/9 creates binding sites for YAP1, and subsequent phosphorylation by GSK3 switches off YAP1 binding and adds binding sites for SMURF1. Ubiquitinated by SMAD-specific E3 ubiquitin ligase SMURF1, leading to its degradation. Monoubiquitinated, leading to prevent DNA-binding. Deubiquitination by USP15 alleviates inhibition and promotes activation of TGF-beta target genes. Dephosphorylation, probably by PPM1A, induces its export from the nucleus to the cytoplasm. Phospho-SMAD1 is ubiquitinated by CHIP leading to disruption of the SMAD1-SMAD4 complex. Ubiquitous. Highest expression seen in the heart and skeletal muscle.

The protein localises to the cytoplasm. It localises to the nucleus. Its function is as follows. Transcriptional modulator that plays a role in various cellular processes, including embryonic development, cell differentiation, and tissue homeostasis. Upon BMP ligand binding to their receptors at the cell surface, is phosphorylated by activated type I BMP receptors (BMPRIs) and associates with SMAD4 to form a heteromeric complex which translocates into the nucleus acting as transcription factor. In turn, the hetero-trimeric complex recognizes cis-regulatory elements containing Smad Binding Elements (SBEs) to modulate the outcome of the signaling network. SMAD1/OAZ1/PSMB4 complex mediates the degradation of the CREBBP/EP300 repressor SNIP1. Positively regulates BMP4-induced expression of odontogenic development regulator MSX1 following IPO7-mediated nuclear import. This is Mothers against decapentaplegic homolog 1 (SMAD1) from Homo sapiens (Human).